The following is a 635-amino-acid chain: Chaperone protein HtpG (635 aa).

The a; substrate-binding stretch occupies residues 1-343 (MSVETQKETL…SNDLSLNVSR (343 aa)). The b stretch occupies residues 344–560 (EILQKDPIID…EQDMGLQMRQ (217 aa)). A c region spans residues 561 to 635 (ILEASGQKVP…LNKLLVELSV (75 aa)).

The protein belongs to the heat shock protein 90 family. Homodimer.

The protein resides in the cytoplasm. Its function is as follows. Molecular chaperone. Has ATPase activity. This is Chaperone protein HtpG from Pseudomonas syringae pv. tomato (strain ATCC BAA-871 / DC3000).